We begin with the raw amino-acid sequence, 600 residues long: Integrator complex subunit 11 (600 aa).

Positions 68, 70, 72, 73, 157, and 178 each coordinate Zn(2+). The HXHXDH motif motif lies at 68-73 (HFHLDH). Glu-203 is a catalytic residue. A Glycyl lysine isopeptide (Lys-Gly) (interchain with G-Cter in SUMO) cross-link involves residue Lys-381. His-414 is a Zn(2+) binding site. Residues Lys-462 and Lys-475 each participate in a glycyl lysine isopeptide (Lys-Gly) (interchain with G-Cter in SUMO) cross-link. The Nuclear localization signal signature appears at 469 to 479 (LLPEAKKPRLL).

The protein belongs to the metallo-beta-lactamase superfamily. RNA-metabolizing metallo-beta-lactamase-like family. INTS11 subfamily. As to quaternary structure, component of the Integrator complex, composed of core subunits INTS1, INTS2, INTS3, INTS4, INTS5, INTS6, INTS7, INTS8, INTS9/RC74, INTS10, INTS11/CPSF3L, INTS12, INTS13, INTS14 and INTS15. The core complex associates with protein phosphatase 2A subunits PPP2CA and PPP2R1A, to form the Integrator-PP2A (INTAC) complex. INTS11 is part of the RNA endonuclease subcomplex, composed of INTS4, INTS9, INTS11 and inositol hexakisphosphate (InsP6). Interacts with WDR73; interaction is required for the assembly of the RNA endonuclease subcomplex in the cytoplasm. Interacts with BRAT1; interaction is required for the assembly of the RNA endonuclease subcomplex and inhibits the endonuclease activity of INTS11 before formation of mature integrator complex. Requires Zn(2+) as cofactor. In terms of processing, sumoylated; sumoylation regulates its subcellular location and is required for integrator complex integrity.

It localises to the nucleus. It is found in the cytoplasm. With respect to regulation, the RNA endonuclease activity is inhibited by BRAT1 that forms hyrogen bond and hydrophobic interactions with the active site. Functionally, RNA endonuclease component of the integrator complex, a multiprotein complex that terminates RNA polymerase II (Pol II) transcription in the promoter-proximal region of genes. The integrator complex provides a quality checkpoint during transcription elongation by driving premature transcription termination of transcripts that are unfavorably configured for transcriptional elongation: the complex terminates transcription by (1) catalyzing dephosphorylation of the C-terminal domain (CTD) of Pol II subunit POLR2A/RPB1 and SUPT5H/SPT5, (2) degrading the exiting nascent RNA transcript via endonuclease activity and (3) promoting the release of Pol II from bound DNA. The integrator complex is also involved in terminating the synthesis of non-coding Pol II transcripts, such as enhancer RNAs (eRNAs), small nuclear RNAs (snRNAs), telomerase RNAs and long non-coding RNAs (lncRNAs). Within the integrator complex, INTS11 constitutes the RNA endonuclease subunit that degrades exiting nascent RNA transcripts. Mediates recruitment of cytoplasmic dynein to the nuclear envelope, probably as component of the integrator complex. The protein is Integrator complex subunit 11 (INTS11) of Pongo abelii (Sumatran orangutan).